The chain runs to 103 residues: Matrix Gla protein (103 aa).

The N-terminal stretch at 1 to 19 (MKSLLPLAILAALAVAALC) is a signal peptide. E21 bears the 4-carboxyglutamate mark. Phosphoserine occurs at positions 22, 25, and 28. The region spanning 51-97 (HAKAQERVRELNKPAQEINREACDDYKLCERYALIYGYNAAYNRYFR) is the Gla domain. 4-carboxyglutamate occurs at positions 56, 60, 67, and 71. C73 and C79 are joined by a disulfide.

This sequence belongs to the osteocalcin/matrix Gla protein family. Requires vitamin K-dependent gamma-carboxylation for its function.

Its subcellular location is the secreted. Associates with the organic matrix of bone and cartilage. Thought to act as an inhibitor of bone formation. The protein is Matrix Gla protein (Mgp) of Rattus norvegicus (Rat).